The following is a 184-amino-acid chain: Ribosome-recycling factor (184 aa).

The protein belongs to the RRF family.

Its subcellular location is the cytoplasm. Functionally, responsible for the release of ribosomes from messenger RNA at the termination of protein biosynthesis. May increase the efficiency of translation by recycling ribosomes from one round of translation to another. The sequence is that of Ribosome-recycling factor from Leptospira borgpetersenii serovar Hardjo-bovis (strain JB197).